Consider the following 360-residue polypeptide: Phospho-N-acetylmuramoyl-pentapeptide-transferase (360 aa).

The next 10 membrane-spanning stretches (helical) occupy residues 21–41 (YITVRANLALLTALFISLWIG), 73–93 (TMGGVMILFSIGVSTLLWANL), 94–114 (ANPYIWVCLFVLFGYGAIGFV), 132–152 (WKYFWMSVVALVAILWLYWLG), 168–188 (IMPQLGLFYIVLSYFVIVGTG), 199–219 (GLAIMPTALVAGAFALIAWAT), 239–259 (VVVFCTAIVGASLGFLWFNTY), 263–283 (VFMGDVGSLALGGALGVVAIL), 288–308 (FLLVIMGGVFVVEALSVILQV), and 338–358 (VIIRFWIISLMLVLMGLVTLK).

Belongs to the glycosyltransferase 4 family. MraY subfamily. Requires Mg(2+) as cofactor.

The protein localises to the cell inner membrane. It carries out the reaction UDP-N-acetyl-alpha-D-muramoyl-L-alanyl-gamma-D-glutamyl-meso-2,6-diaminopimeloyl-D-alanyl-D-alanine + di-trans,octa-cis-undecaprenyl phosphate = di-trans,octa-cis-undecaprenyl diphospho-N-acetyl-alpha-D-muramoyl-L-alanyl-D-glutamyl-meso-2,6-diaminopimeloyl-D-alanyl-D-alanine + UMP. It functions in the pathway cell wall biogenesis; peptidoglycan biosynthesis. In terms of biological role, catalyzes the initial step of the lipid cycle reactions in the biosynthesis of the cell wall peptidoglycan: transfers peptidoglycan precursor phospho-MurNAc-pentapeptide from UDP-MurNAc-pentapeptide onto the lipid carrier undecaprenyl phosphate, yielding undecaprenyl-pyrophosphoryl-MurNAc-pentapeptide, known as lipid I. The protein is Phospho-N-acetylmuramoyl-pentapeptide-transferase of Haemophilus influenzae (strain ATCC 51907 / DSM 11121 / KW20 / Rd).